Reading from the N-terminus, the 121-residue chain is Large ribosomal subunit protein uL22 (121 aa).

This sequence belongs to the universal ribosomal protein uL22 family. As to quaternary structure, part of the 50S ribosomal subunit.

In terms of biological role, this protein binds specifically to 23S rRNA; its binding is stimulated by other ribosomal proteins, e.g. L4, L17, and L20. It is important during the early stages of 50S assembly. It makes multiple contacts with different domains of the 23S rRNA in the assembled 50S subunit and ribosome. The globular domain of the protein is located near the polypeptide exit tunnel on the outside of the subunit, while an extended beta-hairpin is found that lines the wall of the exit tunnel in the center of the 70S ribosome. This Salinibacter ruber (strain DSM 13855 / M31) protein is Large ribosomal subunit protein uL22.